A 329-amino-acid polypeptide reads, in one-letter code: uncharacterized protein (329 aa).

An SIS domain is found at isoleucine 38–phenylalanine 184. Glycine 56–alanine 61 contributes to the ATP binding site. 2 consecutive CBS domains span residues glutamine 211–leucine 267 and glutamate 270–alanine 329.

The protein belongs to the SIS family. GutQ/KpsF subfamily.

This is an uncharacterized protein from Helicobacter pylori (strain ATCC 700392 / 26695) (Campylobacter pylori).